The following is an 83-amino-acid chain: Subtilisin-chymotrypsin inhibitor CI-1A (83 aa).

The tract at residues 1-24 (MSSMEGSVLKYPEPTEGSIGASSA) is disordered.

It belongs to the protease inhibitor I13 (potato type I serine protease inhibitor) family.

Inhibits both subtilisin and chymotrypsin. The protein is Subtilisin-chymotrypsin inhibitor CI-1A of Hordeum vulgare (Barley).